Consider the following 347-residue polypeptide: Phosphoribosylformylglycinamidine cyclo-ligase (347 aa).

Belongs to the AIR synthase family.

It is found in the cytoplasm. It carries out the reaction 2-formamido-N(1)-(5-O-phospho-beta-D-ribosyl)acetamidine + ATP = 5-amino-1-(5-phospho-beta-D-ribosyl)imidazole + ADP + phosphate + H(+). It functions in the pathway purine metabolism; IMP biosynthesis via de novo pathway; 5-amino-1-(5-phospho-D-ribosyl)imidazole from N(2)-formyl-N(1)-(5-phospho-D-ribosyl)glycinamide: step 2/2. The sequence is that of Phosphoribosylformylglycinamidine cyclo-ligase from Bacillus cytotoxicus (strain DSM 22905 / CIP 110041 / 391-98 / NVH 391-98).